A 352-amino-acid chain; its full sequence is Uroporphyrinogen decarboxylase (352 aa).

Substrate-binding positions include 27–31, D77, Y154, T209, and H325; that span reads RQAGR.

The protein belongs to the uroporphyrinogen decarboxylase family. As to quaternary structure, homodimer.

It is found in the cytoplasm. The enzyme catalyses uroporphyrinogen III + 4 H(+) = coproporphyrinogen III + 4 CO2. It participates in porphyrin-containing compound metabolism; protoporphyrin-IX biosynthesis; coproporphyrinogen-III from 5-aminolevulinate: step 4/4. Catalyzes the decarboxylation of four acetate groups of uroporphyrinogen-III to yield coproporphyrinogen-III. This Legionella pneumophila subsp. pneumophila (strain Philadelphia 1 / ATCC 33152 / DSM 7513) protein is Uroporphyrinogen decarboxylase.